Consider the following 116-residue polypeptide: UPF0342 protein CTC_01059 (116 aa).

The protein belongs to the UPF0342 family.

This chain is UPF0342 protein CTC_01059, found in Clostridium tetani (strain Massachusetts / E88).